Reading from the N-terminus, the 348-residue chain is Dihydroorotase (348 aa).

Zn(2+) contacts are provided by histidine 17 and histidine 19. Substrate-binding positions include 19 to 21 (HLR) and asparagine 45. Residues lysine 103, histidine 140, and histidine 178 each contribute to the Zn(2+) site. Lysine 103 is subject to N6-carboxylysine. Histidine 140 lines the substrate pocket. Leucine 223 contacts substrate. Aspartate 251 lines the Zn(2+) pocket. The active site involves aspartate 251. Histidine 255 and alanine 267 together coordinate substrate.

This sequence belongs to the metallo-dependent hydrolases superfamily. DHOase family. Class II DHOase subfamily. As to quaternary structure, homodimer. The cofactor is Zn(2+).

It carries out the reaction (S)-dihydroorotate + H2O = N-carbamoyl-L-aspartate + H(+). It functions in the pathway pyrimidine metabolism; UMP biosynthesis via de novo pathway; (S)-dihydroorotate from bicarbonate: step 3/3. In terms of biological role, catalyzes the reversible cyclization of carbamoyl aspartate to dihydroorotate. This Escherichia coli (strain SMS-3-5 / SECEC) protein is Dihydroorotase.